Here is a 166-residue protein sequence, read N- to C-terminus: MSRYGKNLVHYIIVEHDDQRGQKPIDDDDEKNFYYHCSFTFETFFRATAFLLAPAVCAVREVPCRLTRTRYNATEYIEGYGWMISLQQGLGVAEFYRPWPLSVQLQRYTTPSRRSRFAVLTPQRKCHQNEANGQDLSLLILLSRIYPLCSNTSQTRRVAARKGKLS.

The protein is Protein UTR5 (UTR5) of Saccharomyces cerevisiae (strain ATCC 204508 / S288c) (Baker's yeast).